Here is a 190-residue protein sequence, read N- to C-terminus: Xanthine phosphoribosyltransferase (190 aa).

Xanthine contacts are provided by leucine 20 and asparagine 27. 5-phospho-alpha-D-ribose 1-diphosphate is bound at residue 128–132; that stretch reads ANGHA. Position 156 (lysine 156) interacts with xanthine.

Belongs to the purine/pyrimidine phosphoribosyltransferase family. Xpt subfamily. In terms of assembly, homodimer.

It is found in the cytoplasm. The enzyme catalyses XMP + diphosphate = xanthine + 5-phospho-alpha-D-ribose 1-diphosphate. It participates in purine metabolism; XMP biosynthesis via salvage pathway; XMP from xanthine: step 1/1. Converts the preformed base xanthine, a product of nucleic acid breakdown, to xanthosine 5'-monophosphate (XMP), so it can be reused for RNA or DNA synthesis. This chain is Xanthine phosphoribosyltransferase, found in Pseudomonas paraeruginosa (strain DSM 24068 / PA7) (Pseudomonas aeruginosa (strain PA7)).